The sequence spans 1082 residues: MRTTPTFPTKTFKPTAMALAVATTLSACLGGGGGGTSAPDFNAGGTGIGSNSRATTAKSAAVSYAGIKNEMCKDRSMLCAGRDDVAVTDRDAKINAPPPNLHTGDFPNPNDAYKNLINLKPAIEAGYTGRGVEVGIVDTGESVGSISFPELYGRKEHGYNENYKNYTAYMRKEAPEDGGGKDIEASFDDEAVIETEAKPTDIRHVKEIGHIDLVSHIIGGRSVDGRPAGGIAPDATLHIMNTNDETKNEMMVAAIRNAWVKLGERGVRIVNNSFGTTSRAGTADLFQIANSEEQYRQALLDYSGGDKTDEGIRLMQQSDYGNLSYHIRNKNMLFIFSTGNDAQAQPNTYALLPFYEKDAQKGIITVAGVDRSGEKFKREMYGEPGTEPLEYGSNHCGITAMWCLSAPYEASVRFTRTNPIQIAGTSFSAPIVTGTAALLLQKYPWMSNDNLRTTLLTTAQDIGAVGVDSKFGWGLLDAGKAMNGPASFPFGDFTADTKGTSDIAYSFRNDISGTGGLIKKGGSQLQLHGNNTYTGKTIIEGGSLVLYGNNKSDMRVETKGALIYNGAASGGSLNSDGIVYLADTDQSGANETVHIKGSLQLDGKGTLYTRLGKLLKVDGTAIIGGKLYMSARGKGAGYLNSTGRRVPFLSAAKIGQDYSFFTNIETDGGLLASLDSVEKTAGSEGDTLSYYVRRGNAARTASAAAHSAPAGLKHAVEQGGSNLENLMVELDASESSATPETVETAAADRTDMPGIRPYGATFRAAAAVQHANAADGVRIFNSLAATVYADSTAAHADMQGRRLKAVSDGLDHNGTGLRVIAQTQQDGGTWEQGGVEGKMRGSTQTVGIAAKTGENTTAAATLGMGRSTWSENSANAKTDSISLFAGIRHDAGDIGYLKGLFSYGRYKNSISRSTGADEHAEGSVNGTLMQLGALGGVNVPFAATGDLTVEGGLRYDLLKQDAFAEKGSALGWSGNSLTEGTLVGLAGLKLSQPLSDKAVLFATAGVERDLNGRDYTVTGGFTGATAATGKTGARNMPHTRLVAGLGADVEFGNGWNGLARYSYAGSKQYGNHSGRVGVGYRF.

An N-terminal signal peptide occupies residues 1–27 (MRTTPTFPTKTFKPTAMALAVATTLSA). Cysteine 28 carries the N-palmitoyl cysteine lipid modification. The S-diacylglycerol cysteine moiety is linked to residue cysteine 28. In terms of domain architecture, Peptidase S8 spans 110–482 (NDAYKNLINL…WGLLDAGKAM (373 aa)). Active-site charge relay system residues include aspartate 138, histidine 210, and serine 426. The Autotransporter domain maps to 808 to 1082 (DGLDHNGTGL…SGRVGVGYRF (275 aa)).

This sequence belongs to the peptidase S8 family. In terms of processing, probably auto-processes to yield a 68-70 kDa form and a C-terminal 30 kDa translocator domain; upon overexpression in situ and in E.coli full-length protein is seen as well as (probably) auto-processed forms of 68-70 kDa and 30 kDa in size, suggesting this may have protease activity.

Its subcellular location is the cell outer membrane. It localises to the cell surface. It is found in the secreted. The protein localises to the host cytoplasm. The protein resides in the host perinuclear region. Its activity is regulated as follows. Cleavage of host complement factor C3 is inhibited by PMSF. Functionally, major human immunogenic protein, detected in patients recovering from meningitidis. Autotransporter with a secreted protease domain involved in processing other autotransporter proteins including App, IgA, LbpB and NHBA. Probably autoprocesses to release the about 70 kDa passenger domain. Both cell surface protein (Neisserial autotransporter lipoprotein NalP) and the passenger domain cleave human (host) complement factor C3, generating a shorter alpha chain and a longer beta chain than normal. Uptake of a passenger domain fragment (residues 101-784) by human cells increases cell metabolic activity; the serine protease activity is required for this increase. Cleaves human (host) complement factor C3, generating a shorter alpha chain and a longer beta chain than normal. Does not act on mouse or rabbit C3. Cleavage causes C3b degradation by human CFI and CFH, and thus decreases deposition of C3b on the bacteria surface and probably facilitates complement escape. Its function is as follows. Plays a role in extracellular-DNA (eDNA) mediated biofilm formation. In some strains (including cc32 strain MC58) eDNA stimulates biofilm formation. When NalP is not expressed (and no longer processes NHBA or IgA) biofilm formation increases. In Neisseria meningitidis serogroup B (strain ATCC BAA-335 / MC58), this protein is Neisserial autotransporter lipoprotein NalP.